A 466-amino-acid polypeptide reads, in one-letter code: Soluble pyridine nucleotide transhydrogenase (466 aa).

36–45 (ERYNNVGGGC) lines the FAD pocket.

Belongs to the class-I pyridine nucleotide-disulfide oxidoreductase family. FAD is required as a cofactor.

The protein localises to the cytoplasm. It carries out the reaction NAD(+) + NADPH = NADH + NADP(+). Conversion of NADPH, generated by peripheral catabolic pathways, to NADH, which can enter the respiratory chain for energy generation. The polypeptide is Soluble pyridine nucleotide transhydrogenase (Yersinia pseudotuberculosis serotype O:1b (strain IP 31758)).